We begin with the raw amino-acid sequence, 237 residues long: Ribosomal RNA small subunit methyltransferase G (237 aa).

Residues G78, F83, 129–130 (AE), and R148 contribute to the S-adenosyl-L-methionine site. The disordered stretch occupies residues 218–237 (KKETPNKYPRKAGMPNKRPL).

The protein belongs to the methyltransferase superfamily. RNA methyltransferase RsmG family.

It localises to the cytoplasm. Specifically methylates the N7 position of a guanine in 16S rRNA. In Streptococcus gordonii (strain Challis / ATCC 35105 / BCRC 15272 / CH1 / DL1 / V288), this protein is Ribosomal RNA small subunit methyltransferase G.